The following is a 242-amino-acid chain: Endoplasmic reticulum membrane protein complex subunit 7 (242 aa).

Residues 1-23 (MAAALWGFFPVLLLLLLSGDVQS) form the signal peptide. At 24-159 (SEVPGAAAEG…IKRESWGWTD (136 aa)) the chain is on the lumenal side. The chain crosses the membrane as a helical span at residues 160 to 180 (FLMNPMVMMMVLPLLIFVLLP). Residues 181-242 (KVVNTSDPDM…TGKSGAGKRR (62 aa)) lie on the Cytoplasmic side of the membrane. The tract at residues 217–242 (LFSSKSSGKSSSGSSKTGKSGAGKRR) is disordered. Low complexity predominate over residues 219 to 235 (SSKSSGKSSSGSSKTGK).

It belongs to the EMC7 family. As to quaternary structure, component of the ER membrane protein complex (EMC).

The protein localises to the endoplasmic reticulum membrane. In terms of biological role, part of the endoplasmic reticulum membrane protein complex (EMC) that enables the energy-independent insertion into endoplasmic reticulum membranes of newly synthesized membrane proteins. Preferentially accommodates proteins with transmembrane domains that are weakly hydrophobic or contain destabilizing features such as charged and aromatic residues. Involved in the cotranslational insertion of multi-pass membrane proteins in which stop-transfer membrane-anchor sequences become ER membrane spanning helices. It is also required for the post-translational insertion of tail-anchored/TA proteins in endoplasmic reticulum membranes. By mediating the proper cotranslational insertion of N-terminal transmembrane domains in an N-exo topology, with translocated N-terminus in the lumen of the ER, controls the topology of multi-pass membrane proteins like the G protein-coupled receptors. By regulating the insertion of various proteins in membranes, it is indirectly involved in many cellular processes. The protein is Endoplasmic reticulum membrane protein complex subunit 7 (EMC7) of Homo sapiens (Human).